The following is a 370-amino-acid chain: Anhydro-N-acetylmuramic acid kinase (370 aa).

An ATP-binding site is contributed by 13 to 20 (GTSLDGVD).

It belongs to the anhydro-N-acetylmuramic acid kinase family.

The catalysed reaction is 1,6-anhydro-N-acetyl-beta-muramate + ATP + H2O = N-acetyl-D-muramate 6-phosphate + ADP + H(+). It functions in the pathway amino-sugar metabolism; 1,6-anhydro-N-acetylmuramate degradation. Its pathway is cell wall biogenesis; peptidoglycan recycling. In terms of biological role, catalyzes the specific phosphorylation of 1,6-anhydro-N-acetylmuramic acid (anhMurNAc) with the simultaneous cleavage of the 1,6-anhydro ring, generating MurNAc-6-P. Is required for the utilization of anhMurNAc either imported from the medium or derived from its own cell wall murein, and thus plays a role in cell wall recycling. The polypeptide is Anhydro-N-acetylmuramic acid kinase (Vibrio cholerae serotype O1 (strain ATCC 39315 / El Tor Inaba N16961)).